A 240-amino-acid polypeptide reads, in one-letter code: Aquaporin SIP1-1 (240 aa).

Helical transmembrane passes span 13 to 33 (LMTF…AAII) and 44 to 64 (APLV…TVIF). An NPA 1 motif is present at residues 70 to 72 (NPT). 3 helical membrane-spanning segments follow: residues 89-109 (SLAI…LAIM), 132-152 (GAIA…LIIL), and 163-183 (FLLA…TGPA). The NPA 2 motif lies at 185–187 (NPA). The chain crosses the membrane as a helical span at residues 203–223 (DHIYVYWISSFVGALSAALLF).

The protein belongs to the MIP/aquaporin (TC 1.A.8) family. SIP (TC 1.A.8.10) subfamily. Expressed in roots and above ground. Expressed in elongating regions of the root tips, trichome cells of the rosette leaves, vascular tissues of the flower petals, stigma, stamens (anthers and filaments), pollen and the top and bottom (receptacle) of siliques.

The protein resides in the endoplasmic reticulum membrane. Water channel required to facilitate the transport of water across cell membrane. In Arabidopsis thaliana (Mouse-ear cress), this protein is Aquaporin SIP1-1 (SIP1-1).